Reading from the N-terminus, the 557-residue chain is Hydroxylamine reductase (557 aa).

Residues cysteine 4, cysteine 7, cysteine 19, and cysteine 26 each coordinate [4Fe-4S] cluster. Hybrid [4Fe-2O-2S] cluster is bound by residues histidine 253, glutamate 277, cysteine 321, cysteine 408, cysteine 436, cysteine 461, glutamate 495, and lysine 497. Cysteine 408 bears the Cysteine persulfide mark.

This sequence belongs to the HCP family. [4Fe-4S] cluster is required as a cofactor. It depends on hybrid [4Fe-2O-2S] cluster as a cofactor.

It localises to the cytoplasm. It catalyses the reaction A + NH4(+) + H2O = hydroxylamine + AH2 + H(+). In terms of biological role, catalyzes the reduction of hydroxylamine to form NH(3) and H(2)O. In Acidithiobacillus ferrooxidans (strain ATCC 53993 / BNL-5-31) (Leptospirillum ferrooxidans (ATCC 53993)), this protein is Hydroxylamine reductase.